The chain runs to 297 residues: MSLLEAIVLGLVQGLTEFLPISSTAHLRIAPELFGWRDPGAAYSAVIQLGTVAAVLIYFRKDIVSLVAAFFRGLARREPFGTLEARLAWFVLVGTLPVGIAGLTLKKFIENEFRSLYVISGSLIVLALILLVVEKRASHQRTLADMRWKDGILIGMWQALALIPGASRSGTTLTGGLSLGLKREDAARYSFLLSIPATTLAGVFELKHLLEAETRPSAMALWVGTLVAFASGMAAIAWLLRFLRTRTTLVFVVYRVALGVLLLVLLQTGKLSPMSGVENVEVPGEPGAPPVEKQITD.

Helical transmembrane passes span 39–59 (PGAA…LIYF), 85–105 (ARLA…GLTL), 113–133 (FRSL…LLVV), 151–171 (GILI…RSGT), 190–210 (SFLL…KHLL), 220–240 (ALWV…AWLL), and 249–269 (LVFV…LQTG).

This sequence belongs to the UppP family.

The protein resides in the cell inner membrane. It catalyses the reaction di-trans,octa-cis-undecaprenyl diphosphate + H2O = di-trans,octa-cis-undecaprenyl phosphate + phosphate + H(+). In terms of biological role, catalyzes the dephosphorylation of undecaprenyl diphosphate (UPP). Confers resistance to bacitracin. In Myxococcus xanthus (strain DK1622), this protein is Undecaprenyl-diphosphatase.